The sequence spans 501 residues: Probable pectate lyase 13 (501 aa).

The signal sequence occupies residues 1 to 22; the sequence is MLLQNFSNTIFLLCLFFTLLSA. Residues asparagine 27 and asparagine 49 are each glycosylated (N-linked (GlcNAc...) asparagine). Residues 55-78 are disordered; it reads RQLSSPSSSSSSSSSSSSSSCRTG. Residues 58-74 show a composition bias toward low complexity; it reads SSPSSSSSSSSSSSSSS. Ca(2+)-binding residues include aspartate 217, aspartate 241, and aspartate 245. Arginine 297 is an active-site residue. Disordered regions lie at residues 329–359 and 408–463; these read INSQGNRYSAPSDPSAKEVTKRVDSKDDGEW and NAGV…SSGD. Positions 343–357 are enriched in basic and acidic residues; that stretch reads SAKEVTKRVDSKDDG. Residues 430 to 449 show a composition bias toward gly residues; the sequence is GGDGGGGGSSGGSSGGGMDV. Positions 450–463 are enriched in low complexity; that stretch reads MGGTTRGSSSSSGD. Serine 474 carries GPI-anchor amidated serine lipidation. Positions 475–501 are cleaved as a propeptide — removed in mature form; the sequence is DAPSRPRLTLLFSLLMISVLSLSTLLL.

It belongs to the polysaccharide lyase 1 family. Ca(2+) serves as cofactor. In terms of tissue distribution, expressed equally in mature leaves, buds, flowers, rosettes and roots.

The protein localises to the cell membrane. It carries out the reaction Eliminative cleavage of (1-&gt;4)-alpha-D-galacturonan to give oligosaccharides with 4-deoxy-alpha-D-galact-4-enuronosyl groups at their non-reducing ends.. Its pathway is glycan metabolism; pectin degradation; 2-dehydro-3-deoxy-D-gluconate from pectin: step 2/5. Its function is as follows. Susceptibility factor required for infection by most powdery mildews, but not by unrelated pathogens. Exact function not known, but clearly affects cell wall composition. In Arabidopsis thaliana (Mouse-ear cress), this protein is Probable pectate lyase 13 (PMR6).